The following is a 300-amino-acid chain: Ribosomal protein bS6--L-glutamate ligase (300 aa).

In terms of domain architecture, ATP-grasp spans Met-104 to Glu-287. ATP-binding positions include Lys-141, Glu-178–Tyr-179, Asp-187, and Arg-211–Asn-213. Mg(2+)-binding residues include Asp-248, Glu-260, and Asn-262. Mn(2+) is bound by residues Asp-248, Glu-260, and Asn-262.

Belongs to the RimK family. The cofactor is Mg(2+). It depends on Mn(2+) as a cofactor.

Its function is as follows. An L-glutamate ligase that catalyzes the ATP-dependent post-translational addition of glutamate residues to the C-terminus of ribosomal protein bS6 (RpsF). Is also able to catalyze the synthesis of poly-alpha-glutamate in vitro, via ATP hydrolysis from unprotected glutamate as substrate. The number of glutamate residues added to either RpsF or to poly-alpha-glutamate changes with pH. In Shigella dysenteriae serotype 1 (strain Sd197), this protein is Ribosomal protein bS6--L-glutamate ligase.